Here is an 89-residue protein sequence, read N- to C-terminus: Small ribosomal subunit protein uS15 (89 aa).

It belongs to the universal ribosomal protein uS15 family. As to quaternary structure, part of the 30S ribosomal subunit. Forms a bridge to the 50S subunit in the 70S ribosome, contacting the 23S rRNA.

One of the primary rRNA binding proteins, it binds directly to 16S rRNA where it helps nucleate assembly of the platform of the 30S subunit by binding and bridging several RNA helices of the 16S rRNA. In terms of biological role, forms an intersubunit bridge (bridge B4) with the 23S rRNA of the 50S subunit in the ribosome. The chain is Small ribosomal subunit protein uS15 from Carboxydothermus hydrogenoformans (strain ATCC BAA-161 / DSM 6008 / Z-2901).